The chain runs to 175 residues: uncharacterized protein (175 aa).

The protein belongs to the asfivirus B175L family.

This is an uncharacterized protein from Ornithodoros (relapsing fever ticks).